Consider the following 1651-residue polypeptide: MPFAKRIVEPQWLCRQRRPAPGPAVDASGGSAEPPPPLQPPGRRDLDEVEAPGPEEPARAVPAPSGLPPPPPPLPAPADQTQPPHGEASVAGEESTAGIPEAAPAAGEASSAAAAAAVLLMLDLCAVSNAALARVLRQLSDVARHACSLFQELESDIQLTHRRVWALQGKLGGVQRVLSTLDPKQEAVPVSNLDIESKLSVYYRAPWHQQRNIFLPATRPPCVEELHRHARQSLQALRREHRSRSDRREQRAAAPLSIAAPPLPAYPPAHSQRRREFKDRHFLTFNSTRSPSPTECCHMTPWSRKSHPPEDEDTDVMLGQRPKNPIHNIPSTLDKQTNWSKALPLPTPEEKMKQDAQVISSCIIPINVTGVGFDREASIRCSLVHSQSVLQRRRKLRRRKTISGIPRRVQQEIDSDESPVARERNVIVHTNPDPSNTVNRISGTRDSECQTEDILIAAPSRRRIRAQRGQSIAASLSHSAGNISALADKGDTMFTPAVSSRTRSRSLPREGNRGGDAEPKVGAKPSAYEEGESFVGDHERTPNDFSEAPSSPSAQDHQPTLGLACSQHLHSPQHKLSERGRSRLSRMAADSGSCDISSNSDTFGSPIHCISTAGVLLSSHMDQKDDHQSSSGNWSGSSSTCPSQTSETIPPAASPPLTGSSHCDSELSLNTAPHANEDASVFVTEQYNDHLDKVRGHRANSFTSTVADLLDDPNNSNTSDSEWNYLHHHHDASCRQDFSPERPKADSLGCPSFTSMATYDSFLEKSPSDKADTSSHFSVDTEGYYTSMHFDCGLKGNKSYVCHYAALGPENGQGVGASPGLPDCAWQDYLDHKRQGRPSISFRKPKAKPTPPKRSSSLRKSDGNADISEKKEPKISSGQHLPHSSREMKLPLDFANTPSRMENANLPTKQEPSWINQSEQGIKEPQLDASDIPPFKDEVAESTHYADLWLLNDLKTNDPYRSLSNSSTATGTTVIECIKSPESSESQTSQSESRATTPSLPSVDNEFKLASPEKLAGLASPSSGYSSQSETPTSSFPTAFFSGPLSPGGSKRKPKVPERKSSLQQPSLKDGTISLSKDLELPIIPPTHLDLSALHNVLNKPFHHRHPLHVFTHNKQNTVGETLRSNPPPSLAITPTILKSVNLRSINKSEEVKQKEENNTDLPYLEESTLTTAALSPSKIRPHTANKSVSRQYSTEDTILSFLDSSAVEMGPDKLHLEKNSTFDVKNRCDPETITSAGSSLLDSNVTKDQVRTETEPIPENTPTKNCAFPTEGFQRVSAARPNDLDGKIIQYGPGPDETLEQVQKAPSAGLEEVAQPESVDVITSQSDSPTRATDVSNQFKHQFVMSRHHDKVPGTISYESEITSVNSFPEKCSKQENIASGISAKSASDNSKAEETQGNVDEASLKESSPSDDSIISPLSEDSQAEAEGVFVSPNKPRTTEDLFAVIHRSKRKVLGRKDSGDMSVRSKSRAPLSSSSSSASSITSPSSNVTTPNSQRSPGLIYRNAKKSNTSNEEFKLLLLKKGSRSDSSYRMSATEILKSPILPKPPGELTAESPQSTDDAHQGSQGAEALSPLSPCSPRVNAEGFSSKSFATSASARVGRSRAPPAASSSRYSVRCRLYNTPMQAISEGETENSDGSPHDDRSSQSST.

3 disordered regions span residues M1 to P104, Q235 to R274, and T288 to T314. Residues M1–P262 are WAVE homology domain (WHD). Over residues S65–A76 the composition is skewed to pro residues. Phosphothreonine is present on residues T332 and T401. Position 415 is a phosphoserine (S415). 2 disordered regions span residues F494 to S598 and H620 to L669. The segment covering L507–V521 has biased composition (basic and acidic residues). S533 is subject to Phosphoserine. Over residues A548–Q558 the composition is skewed to polar residues. A compositionally biased stretch (low complexity) spans S629–T648. The segment covering L657–L669 has biased composition (polar residues). Residue S739 is modified to Phosphoserine. 3 disordered regions span residues Q835–M888, S980–D1004, and G1017–G1071. A compositionally biased stretch (basic and acidic residues) spans R859–K874. Low complexity predominate over residues S980–S993. Polar residues predominate over residues S1020–P1037. At S1176 the chain carries Phosphoserine. T1262 bears the Phosphothreonine mark. The residue at position 1329 (S1329) is a Phosphoserine. Disordered stretches follow at residues I1383–N1436, K1454–K1509, and S1526–T1651. 2 stretches are compositionally biased toward low complexity: residues E1408–D1423 and S1465–S1496. S1499 is subject to Phosphoserine. Over residues E1555–Q1568 the composition is skewed to polar residues. A compositionally biased stretch (low complexity) spans F1588–R1618. Basic and acidic residues predominate over residues S1640–T1651.

It belongs to the NHS family. As to quaternary structure, interacts with the tight junction protein TJP1/ZO-1. Associates with actin-rich structures. Interacts with BRK1 and with all three members of the WAVE protein family, WASF1, WASF2 and WASF3. As to expression, detected at low levels in all tissues analyzed. Detected in fetal and adult brain, lens, retina, retinal pigment epithelium, placenta, lymphocytes and fibroblasts. Levels in retinal pigment epithelium, placenta, lymphocytes, and fibroblasts are very low. Expressed also in kidney, lung and thymus.

Its subcellular location is the apical cell membrane. The protein localises to the cell projection. The protein resides in the lamellipodium. It localises to the cell junction. It is found in the tight junction. Its subcellular location is the focal adhesion. The protein localises to the cytoplasm. Functionally, may function in cell morphology by maintaining the integrity of the circumferential actin ring and controlling lamellipod formation. Involved in the regulation eye, tooth, brain and craniofacial development. This chain is Actin remodeling regulator NHS (NHS), found in Homo sapiens (Human).